We begin with the raw amino-acid sequence, 377 residues long: Prolargin (377 aa).

Residues 1 to 21 form the signal peptide; it reads MRASFFWFLPLLLILASVAQG. The tract at residues 22–61 is disordered; that stretch reads QPRPKPGIRRKPKPRPTPSFPQPHEPAEPTDLPPPLPPGP. 2 stretches are compositionally biased toward pro residues: residues 36–45 and 52–61; these read RPTPSFPQPH and DLPPPLPPGP. LRR repeat units follow at residues 90–109, 110–133, 134–157, 158–178, 179–202, 203–228, 229–249, 250–273, 274–298, 299–318, 319–357, and 358–377; these read RKVPIIPPRIHYLYLQNNFI, TELPVESFKNATGLRWINLDNNRI, RKVDQRVLEKLPGLAFLYMDKNQL, EEVPSALPRNLEQLRLSQNLI, SRIPPGVFSKLENLLLLDLQHNRL, SDGVFKADTFQGLKNLMQLNLAHNIL, RRMPPKVPPAIHQLYLDSNKI, ETIPSGYFKDFPNLAFIRMNYNKL, SDRGLPKNSFNISNLLVLHLSHNKI, SNVPAISNKLEHLYLNNNSI, EKINGTQICPSNLVAFHDFSSDLENVPHLRYLRLDGNFL, and KPPIPLDLMMCFRLLQSVVI. A glycan (N-linked (GlcNAc...) asparagine) is linked at asparagine 119. 3 N-linked (GlcNAc...) asparagine glycosylation sites follow: asparagine 284, asparagine 315, and asparagine 322. A disulfide bond links cysteine 327 and cysteine 368.

Belongs to the small leucine-rich proteoglycan (SLRP) family. SLRP class II subfamily. In terms of assembly, binds the basement membrane heparan sulfate proteoglycan perlecan and triple helical collagens type I and type II. In terms of processing, glycosylated; contains heparan sulfate.

It localises to the secreted. Its subcellular location is the extracellular space. The protein resides in the extracellular matrix. Functionally, may anchor basement membranes to the underlying connective tissue. This chain is Prolargin (Prelp), found in Rattus norvegicus (Rat).